A 69-amino-acid polypeptide reads, in one-letter code: Protein transport protein Sec61 subunit gamma (69 aa).

Residues 1–32 (MDAVDSVVDPLREFAKDSVRLVKRCHKPDRKE) lie on the Cytoplasmic side of the membrane. A helical membrane pass occupies residues 33–61 (FTKVAARTAIGFVVMGFVGFFVKLIFIPI). Residues 62-69 (NNIIVGSG) lie on the Extracellular side of the membrane.

It belongs to the SecE/SEC61-gamma family. In terms of assembly, heterotrimeric complex composed of SEC61-alpha, SEC61-beta and SEC61-gamma.

It is found in the endoplasmic reticulum membrane. Functionally, necessary for protein translocation in the endoplasmic reticulum. The protein is Protein transport protein Sec61 subunit gamma of Oryza sativa subsp. japonica (Rice).